The primary structure comprises 273 residues: 4-hydroxy-tetrahydrodipicolinate reductase (273 aa).

NAD(+)-binding positions include Gly8 to Met13, Glu34, Gly102 to Thr104, and Ser128 to Met131. His161 acts as the Proton donor/acceptor in catalysis. His162 provides a ligand contact to (S)-2,3,4,5-tetrahydrodipicolinate. The active-site Proton donor is Lys165. (S)-2,3,4,5-tetrahydrodipicolinate is bound at residue Gly171–Thr172.

The protein belongs to the DapB family.

It is found in the cytoplasm. It carries out the reaction (S)-2,3,4,5-tetrahydrodipicolinate + NAD(+) + H2O = (2S,4S)-4-hydroxy-2,3,4,5-tetrahydrodipicolinate + NADH + H(+). The enzyme catalyses (S)-2,3,4,5-tetrahydrodipicolinate + NADP(+) + H2O = (2S,4S)-4-hydroxy-2,3,4,5-tetrahydrodipicolinate + NADPH + H(+). It functions in the pathway amino-acid biosynthesis; L-lysine biosynthesis via DAP pathway; (S)-tetrahydrodipicolinate from L-aspartate: step 4/4. Its function is as follows. Catalyzes the conversion of 4-hydroxy-tetrahydrodipicolinate (HTPA) to tetrahydrodipicolinate. The polypeptide is 4-hydroxy-tetrahydrodipicolinate reductase (Methanosphaera stadtmanae (strain ATCC 43021 / DSM 3091 / JCM 11832 / MCB-3)).